Here is a 351-residue protein sequence, read N- to C-terminus: Serine/threonine-protein kinase ZRK1 (351 aa).

The 288-residue stretch at 60 to 347 (FDSSCFVSQD…KELKQIEASL (288 aa)) folds into the Protein kinase domain. ATP contacts are provided by residues 66–74 (VSQDVYYKW) and Lys87. Asp191 acts as the Proton acceptor in catalysis.

This sequence belongs to the protein kinase superfamily. Ser/Thr protein kinase family. ZRK subfamily. In terms of assembly, component of a stable high-order oligomeric complex made of RKS1 and RPP13L4/ZAR1 which recruits Xanthomonas campestris effector XopAC/AvrAC-mediated uridylylated PBL2 in the presence of ATP to form a wheel-like pentameric resistosome; this complex triggers immunity toward X.campestris in vascular tissues. Interacts with RPP13L4/ZAR1 and uridylylated PBL2. As to expression, expressed at high levels in germinating seeds and at lower levels in adult leaves.

It carries out the reaction L-seryl-[protein] + ATP = O-phospho-L-seryl-[protein] + ADP + H(+). It catalyses the reaction L-threonyl-[protein] + ATP = O-phospho-L-threonyl-[protein] + ADP + H(+). Its function is as follows. Serine/threonine-protein kinase that confers a broad-spectrum quantitative disease resistance (QDR) to the pathogenic biotrophic bacteria Xanthomonas campestris (e.g. pv. campestris (Xcc), pv. raphani, pv. armoriaceae and pv. incanae) by restricting bacterial spread to the vascular system from the infection site; X.campestris causes black rot disease in crops. Seems to not have any kinase activity. This chain is Serine/threonine-protein kinase ZRK1, found in Arabidopsis thaliana (Mouse-ear cress).